Here is a 391-residue protein sequence, read N- to C-terminus: Lipid-A-disaccharide synthase (391 aa).

It belongs to the LpxB family.

The catalysed reaction is a lipid X + a UDP-2-N,3-O-bis[(3R)-3-hydroxyacyl]-alpha-D-glucosamine = a lipid A disaccharide + UDP + H(+). The protein operates within bacterial outer membrane biogenesis; LPS lipid A biosynthesis. In terms of biological role, condensation of UDP-2,3-diacylglucosamine and 2,3-diacylglucosamine-1-phosphate to form lipid A disaccharide, a precursor of lipid A, a phosphorylated glycolipid that anchors the lipopolysaccharide to the outer membrane of the cell. The chain is Lipid-A-disaccharide synthase from Azoarcus sp. (strain BH72).